An 863-amino-acid chain; its full sequence is DNA replication licensing factor mcm4-B (863 aa).

A disordered region spans residues 1–130; that stretch reads MSSPTSTPSR…ARKVKQVDLH (130 aa). Polar residues-rich tracts occupy residues 54 to 64 and 84 to 99; these read SPSGDVQSPSG and LDLS…SSRV. The segment at 306–331 adopts a C4-type zinc-finger fold; that stretch reads CQVCAFTTRVEIDRGRIAEPSVCKHC. In terms of domain architecture, MCM spans 458–667; it reads IYERLAAALA…YDRRLAHHLV (210 aa). Tyr-471, Arg-497, Lys-516, Ser-517, Asn-618, Arg-643, Arg-732, and Glu-735 together coordinate ATP. Positions 642-645 match the Arginine finger motif; sequence SRFD.

This sequence belongs to the MCM family. Component of the mcm2-7 complex (RLF-M). The complex forms a toroidal hexameric ring with the proposed subunit order mcm2-mcm6-mcm4-mcm7-mcm3-mcm5. The heterodimer of mmcm3/mcm5 interacts with mcm4, mmcm6, mcm7 and weakly with mcm2. Begins to associate with zmcm6 at the neurula stage. Component of the CMG helicase complex, composed of the mcm2-7 complex, the GINS complex and cdc45. Hyperphosphorylated during mitosis in a mechanism requiring cdc2-cyclin B and other kinases. Undergoes dephosphorylation after exiting mitosis, existing in a partially phosphorylated state in the cytosolic interphase mcm complex which associates with the pre-replication complexes (pre-Rcs). Complete dephosphorylation inactivates the mcm complex, preventing its binding to chromatin. Becomes actively phosphorylated during S phase once the mcm complex is assembled on the chromatin. This chromatin-associated phosphorylation occurs during the activation of the pre-Rcs and is independent of cdks. Phosphorylated by the cdc7-dbf4b complex.

It is found in the nucleus. Its subcellular location is the chromosome. It catalyses the reaction ATP + H2O = ADP + phosphate + H(+). Its function is as follows. Acts as a component of the MCM2-7 complex (MCM complex) which is the replicative helicase essential for 'once per cell cycle' DNA replication initiation and elongation in eukaryotic cells. Core component of CDC45-MCM-GINS (CMG) helicase, the molecular machine that unwinds template DNA during replication, and around which the replisome is built. The active ATPase sites in the MCM2-7 ring are formed through the interaction surfaces of two neighboring subunits such that a critical structure of a conserved arginine finger motif is provided in trans relative to the ATP-binding site of the Walker A box of the adjacent subunit. The six ATPase active sites, however, are likely to contribute differentially to the complex helicase activity. The chain is DNA replication licensing factor mcm4-B (mcm4-b) from Xenopus laevis (African clawed frog).